Reading from the N-terminus, the 95-residue chain is Co-chaperonin GroES (95 aa).

This sequence belongs to the GroES chaperonin family. In terms of assembly, heptamer of 7 subunits arranged in a ring. Interacts with the chaperonin GroEL.

Its subcellular location is the cytoplasm. Its function is as follows. Together with the chaperonin GroEL, plays an essential role in assisting protein folding. The GroEL-GroES system forms a nano-cage that allows encapsulation of the non-native substrate proteins and provides a physical environment optimized to promote and accelerate protein folding. GroES binds to the apical surface of the GroEL ring, thereby capping the opening of the GroEL channel. This Desulfotalea psychrophila (strain LSv54 / DSM 12343) protein is Co-chaperonin GroES.